Reading from the N-terminus, the 233-residue chain is C-type lectin domain-containing protein 87 (233 aa).

The N-terminal stretch at Met-1–Ala-19 is a signal peptide. Residue Ser-31 is glycosylated (O-linked (Xyl...) (chondroitin sulfate) serine). A glycan (N-linked (GlcNAc...) asparagine) is linked at Asn-81. Residues Phe-93 to Glu-223 form the C-type lectin domain. 2 disulfides stabilise this stretch: Cys-114-Cys-222 and Cys-193-Cys-214. N-linked (GlcNAc...) asparagine glycosylation is present at Asn-225.

This is C-type lectin domain-containing protein 87 from Caenorhabditis elegans.